A 73-amino-acid chain; its full sequence is Metallothionein (73 aa).

Residues Cys-15, Cys-20, Cys-26, Cys-28, Cys-32, Cys-34, Cys-39, Cys-46, Cys-48, Cys-52, Cys-54, Cys-58, Cys-64, Cys-66, Cys-70, and Cys-72 each contribute to the Cd(2+) site.

It belongs to the metallothionein superfamily. Type 2 family.

In terms of biological role, the metallothioneins are involved in the cellular sequestration of toxic metal ions. This chain is Metallothionein, found in Dreissena polymorpha (Zebra mussel).